The sequence spans 88 residues: Small ribosomal subunit protein uS17 (88 aa).

The protein belongs to the universal ribosomal protein uS17 family. In terms of assembly, part of the 30S ribosomal subunit.

Its function is as follows. One of the primary rRNA binding proteins, it binds specifically to the 5'-end of 16S ribosomal RNA. The protein is Small ribosomal subunit protein uS17 of Ligilactobacillus salivarius (strain UCC118) (Lactobacillus salivarius).